A 611-amino-acid polypeptide reads, in one-letter code: Aspartate--tRNA(Asp/Asn) ligase (611 aa).

E174 is a binding site for L-aspartate. Residues 198–201 (QLFK) are aspartate. R220 lines the L-aspartate pocket. Residues 220 to 222 (RDE) and Q229 contribute to the ATP site. An L-aspartate-binding site is contributed by H467. E501 provides a ligand contact to ATP. An L-aspartate-binding site is contributed by R508. 553–556 (GLDR) contacts ATP.

This sequence belongs to the class-II aminoacyl-tRNA synthetase family. Type 1 subfamily. As to quaternary structure, homodimer.

It localises to the cytoplasm. The catalysed reaction is tRNA(Asx) + L-aspartate + ATP = L-aspartyl-tRNA(Asx) + AMP + diphosphate. Aspartyl-tRNA synthetase with relaxed tRNA specificity since it is able to aspartylate not only its cognate tRNA(Asp) but also tRNA(Asn). Reaction proceeds in two steps: L-aspartate is first activated by ATP to form Asp-AMP and then transferred to the acceptor end of tRNA(Asp/Asn). In Albidiferax ferrireducens (strain ATCC BAA-621 / DSM 15236 / T118) (Rhodoferax ferrireducens), this protein is Aspartate--tRNA(Asp/Asn) ligase.